The primary structure comprises 166 residues: Large ribosomal subunit protein uL18c (166 aa).

The transit peptide at methionine 1–alanine 44 directs the protein to the chloroplast.

Belongs to the universal ribosomal protein uL18 family. As to quaternary structure, component of the chloroplast large ribosomal subunit (LSU). Mature 70S chloroplast ribosomes of higher plants consist of a small (30S) and a large (50S) subunit. The 30S small subunit contains 1 molecule of ribosomal RNA (16S rRNA) and 24 different proteins. The 50S large subunit contains 3 rRNA molecules (23S, 5S and 4.5S rRNA) and 33 different proteins.

Its subcellular location is the plastid. The protein resides in the chloroplast. Functionally, component of the chloroplast ribosome (chloro-ribosome), a dedicated translation machinery responsible for the synthesis of chloroplast genome-encoded proteins, including proteins of the transcription and translation machinery and components of the photosynthetic apparatus. In Spinacia oleracea (Spinach), this protein is Large ribosomal subunit protein uL18c (RPL18).